The primary structure comprises 317 residues: Transaldolase (317 aa).

Lys-126 acts as the Schiff-base intermediate with substrate in catalysis.

It belongs to the transaldolase family. Type 1 subfamily. As to quaternary structure, homodimer.

The protein localises to the cytoplasm. It carries out the reaction D-sedoheptulose 7-phosphate + D-glyceraldehyde 3-phosphate = D-erythrose 4-phosphate + beta-D-fructose 6-phosphate. The protein operates within carbohydrate degradation; pentose phosphate pathway; D-glyceraldehyde 3-phosphate and beta-D-fructose 6-phosphate from D-ribose 5-phosphate and D-xylulose 5-phosphate (non-oxidative stage): step 2/3. Functionally, transaldolase is important for the balance of metabolites in the pentose-phosphate pathway. This Burkholderia multivorans (strain ATCC 17616 / 249) protein is Transaldolase.